The following is a 324-amino-acid chain: Hydroxylase/desaturase CTB9 (324 aa).

Polar residues predominate over residues methionine 1–leucine 11. Disordered stretches follow at residues methionine 1–proline 33 and threonine 288–alanine 308.

This sequence belongs to the asaB hydroxylase/desaturase family.

It participates in mycotoxin biosynthesis. Functionally, hydroxylase/desaturase; part of the gene cluster that mediates the biosynthesis of cercosporin, a light-activated, non-host-selective toxin. The perylenequinone chromophore of cercosporin absorbs light energy to attain an electronically-activated triplet state and produces active oxygen species such as the hydroxyl radical, superoxide, hydrogen peroxide or singlet oxygen upon reaction with oxygen molecules. These reactive oxygen species cause damage to various cellular components including lipids, proteins and nucleic acids. The first step of cercosporin biosynthesis is performed by the polyketide synthase CTB1 which catalyzes the formation of nor-toralactone. The starter unit acyltransferase (SAT) domain of CTB1 initiates polyketide extension by the selective utilization of acetyl-CoA, which is elongated to the heptaketide in the beta-ketoacyl synthase (KS) domain by successive condensations with six malonyl units introduced by the malonyl acyltransferase (MAT) domain. The product template (PT) domain catalyzes C4-C9 and C2-C11 aldol cyclizations and dehydrations to a trihydroxynaphthalene, which is thought to be delivered to the thioesterase (TE) domain for product release. The bifunctional enzyme CTB3 then methylates nor-toralactone to toralactone before conducting an unusual oxidative aromatic ring opening. The O-methyltransferase CTB2 further methylates the nascent OH-6 of the CBT3 product, blocking further oxidation at this site before the reductase CTB6 reduces the 2-oxopropyl ketone at position C7, giving naphthalene. The FAD-dependent monooxygenase CTB5 in concert with the multicopper oxidase CTB12 are responsible for homodimerization of naphthalene with CTB7 installing the dioxepine moiety, finally producing cercosporin. The fasciclin domain-containing protein CTB11 might act with CTB5 and CTB12 whereas the roles of CTB9 and CTB10 have still to be elucidated. The chain is Hydroxylase/desaturase CTB9 from Cercospora beticola (Sugarbeet leaf spot fungus).